A 600-amino-acid chain; its full sequence is Sodium- and chloride-dependent betaine transporter (600 aa).

Residues 1-31 (MGTSEHVPLPTDEAKAKELEQSQHSEEPDRG) form a disordered region. Topologically, residues 1-38 (MGTSEHVPLPTDEAKAKELEQSQHSEEPDRGQWTGKFD) are cytoplasmic. Basic and acidic residues predominate over residues 12-30 (DEAKAKELEQSQHSEEPDR). 3 helical membrane passes run 39–59 (FLMSMVAYAVGLGNVWRFPYL), 68–88 (FLVVYMIFFCLAAVPIFLMEV), and 116–136 (VVIAFMCIAYFCVIVAWAMFY). The Extracellular portion of the chain corresponds to 137-207 (MISSIAWVFP…DTGDISEFGG (71 aa)). An N-linked (GlcNAc...) asparagine glycan is attached at asparagine 165. Helical transmembrane passes span 208–228 (IQWELFFIMAAAWLIVYFALW) and 237–257 (FVYFCALFPYVLIFILLIRGL). Asparagine 273 is a glycosylation site (N-linked (GlcNAc...) asparagine). Helical transmembrane passes span 286–306 (AGTQVFYSYGVGFGALIALGS), 321–341 (MCFINGCTSITAGFAVFSILG), 378–398 (VFAVLFFLMITILGLDSQVCM), 420–440 (SLGIFCLFFFCIGIPMVTHSG), 454–474 (GYALLFVVFFEVVGLAYGFGA), 499–519 (FCAPATSLVLFVFCVVYYHPV), and 536–556 (WFLSSCSMVVIPGYAIYYLFF). The Cytoplasmic segment spans residues 557 to 600 (TNKHLTLKERVRKGLNLDGSFESPAKKNLVNNAEELKFIESSSQ).

This sequence belongs to the sodium:neurotransmitter symporter (SNF) family. In terms of tissue distribution, highly expressed in the head, the excretory canal, tail hypodermal cells, epidermis and vulval epithelial cells. Expressed in the excretory canal-associated neuron and in some non-amphidial sensory neurons in the head (at protein level).

It is found in the cell membrane. In terms of biological role, betaine transporter dependent on Na(+) and Cl(-) ions that functions primarily in the epidermis to clear betaine from the extracellular space. Elicits current in response to betaine but not in response to GABA, L-carnitine, sarcosine, glycine or dimethylglycine. This Caenorhabditis elegans protein is Sodium- and chloride-dependent betaine transporter.